An 87-amino-acid chain; its full sequence is Phosphoribosyl-ATP pyrophosphatase (87 aa).

Belongs to the PRA-PH family.

The protein localises to the cytoplasm. It catalyses the reaction 1-(5-phospho-beta-D-ribosyl)-ATP + H2O = 1-(5-phospho-beta-D-ribosyl)-5'-AMP + diphosphate + H(+). It functions in the pathway amino-acid biosynthesis; L-histidine biosynthesis; L-histidine from 5-phospho-alpha-D-ribose 1-diphosphate: step 2/9. The polypeptide is Phosphoribosyl-ATP pyrophosphatase (Kocuria rhizophila (strain ATCC 9341 / DSM 348 / NBRC 103217 / DC2201)).